Consider the following 660-residue polypeptide: Bifunctional polymyxin resistance protein ArnA (660 aa).

Residues 1-304 (MKTVVFAYHD…MLGLVQGSRL (304 aa)) are formyltransferase ArnAFT. (6R)-10-formyltetrahydrofolate is bound at residue 86-88 (HLI). The active-site Proton donor; for formyltransferase activity is His-104. (6R)-10-formyltetrahydrofolate is bound by residues Arg-114 and 136–140 (VKRAD). The segment at 314 to 660 (RRTRVLILGV…RTVDLTDKPS (347 aa)) is dehydrogenase ArnADH. NAD(+) contacts are provided by residues Asp-347 and 368-369 (DI). Residues Ala-393, Tyr-398, and 432 to 433 (TS) contribute to the UDP-alpha-D-glucuronate site. Glu-434 acts as the Proton acceptor; for decarboxylase activity in catalysis. Residues Arg-460, Asn-492, 526 to 535 (KLIDGGKQKR), and Tyr-613 each bind UDP-alpha-D-glucuronate. The active-site Proton donor; for decarboxylase activity is Arg-619.

The protein in the N-terminal section; belongs to the Fmt family. UDP-L-Ara4N formyltransferase subfamily. In the C-terminal section; belongs to the NAD(P)-dependent epimerase/dehydratase family. UDP-glucuronic acid decarboxylase subfamily. As to quaternary structure, homohexamer, formed by a dimer of trimers.

It carries out the reaction UDP-alpha-D-glucuronate + NAD(+) = UDP-beta-L-threo-pentopyranos-4-ulose + CO2 + NADH. The enzyme catalyses UDP-4-amino-4-deoxy-beta-L-arabinose + (6R)-10-formyltetrahydrofolate = UDP-4-deoxy-4-formamido-beta-L-arabinose + (6S)-5,6,7,8-tetrahydrofolate + H(+). The protein operates within nucleotide-sugar biosynthesis; UDP-4-deoxy-4-formamido-beta-L-arabinose biosynthesis; UDP-4-deoxy-4-formamido-beta-L-arabinose from UDP-alpha-D-glucuronate: step 1/3. It functions in the pathway nucleotide-sugar biosynthesis; UDP-4-deoxy-4-formamido-beta-L-arabinose biosynthesis; UDP-4-deoxy-4-formamido-beta-L-arabinose from UDP-alpha-D-glucuronate: step 3/3. It participates in bacterial outer membrane biogenesis; lipopolysaccharide biosynthesis. Functionally, bifunctional enzyme that catalyzes the oxidative decarboxylation of UDP-glucuronic acid (UDP-GlcUA) to UDP-4-keto-arabinose (UDP-Ara4O) and the addition of a formyl group to UDP-4-amino-4-deoxy-L-arabinose (UDP-L-Ara4N) to form UDP-L-4-formamido-arabinose (UDP-L-Ara4FN). The modified arabinose is attached to lipid A and is required for resistance to polymyxin and cationic antimicrobial peptides. In Shigella sonnei (strain Ss046), this protein is Bifunctional polymyxin resistance protein ArnA.